A 442-amino-acid chain; its full sequence is tRNA-2-methylthio-N(6)-dimethylallyladenosine synthase (442 aa).

The region spanning 2 to 120 is the MTTase N-terminal domain; that stretch reads KKVFIRTFGC…LPKMIVDKET (119 aa). The [4Fe-4S] cluster site is built by cysteine 11, cysteine 49, cysteine 83, cysteine 157, cysteine 161, and cysteine 164. A Radical SAM core domain is found at 143–375; that stretch reads RVEGGAAFVS…NEVIEAETAR (233 aa). Residues 378-441 enclose the TRAM domain; it reads QTMIGTVQRC…TFSLRGKIVE (64 aa).

This sequence belongs to the methylthiotransferase family. MiaB subfamily. In terms of assembly, monomer. The cofactor is [4Fe-4S] cluster.

The protein resides in the cytoplasm. The enzyme catalyses N(6)-dimethylallyladenosine(37) in tRNA + (sulfur carrier)-SH + AH2 + 2 S-adenosyl-L-methionine = 2-methylsulfanyl-N(6)-dimethylallyladenosine(37) in tRNA + (sulfur carrier)-H + 5'-deoxyadenosine + L-methionine + A + S-adenosyl-L-homocysteine + 2 H(+). In terms of biological role, catalyzes the methylthiolation of N6-(dimethylallyl)adenosine (i(6)A), leading to the formation of 2-methylthio-N6-(dimethylallyl)adenosine (ms(2)i(6)A) at position 37 in tRNAs that read codons beginning with uridine. In Neisseria gonorrhoeae (strain NCCP11945), this protein is tRNA-2-methylthio-N(6)-dimethylallyladenosine synthase.